The following is a 455-amino-acid chain: Glutamate-1-semialdehyde 2,1-aminomutase (455 aa).

Lys-286 carries the post-translational modification N6-(pyridoxal phosphate)lysine.

It belongs to the class-III pyridoxal-phosphate-dependent aminotransferase family. HemL subfamily. As to quaternary structure, homodimer. Requires pyridoxal 5'-phosphate as cofactor.

The protein resides in the cytoplasm. It catalyses the reaction (S)-4-amino-5-oxopentanoate = 5-aminolevulinate. The protein operates within porphyrin-containing compound metabolism; protoporphyrin-IX biosynthesis; 5-aminolevulinate from L-glutamyl-tRNA(Glu): step 2/2. The polypeptide is Glutamate-1-semialdehyde 2,1-aminomutase (Clavibacter michiganensis subsp. michiganensis (strain NCPPB 382)).